Here is a 1374-residue protein sequence, read N- to C-terminus: DNA-directed RNA polymerase subunit beta (1374 aa).

This sequence belongs to the RNA polymerase beta chain family. In terms of assembly, the RNAP catalytic core consists of 2 alpha, 1 beta, 1 beta' and 1 omega subunit. When a sigma factor is associated with the core the holoenzyme is formed, which can initiate transcription.

The catalysed reaction is RNA(n) + a ribonucleoside 5'-triphosphate = RNA(n+1) + diphosphate. In terms of biological role, DNA-dependent RNA polymerase catalyzes the transcription of DNA into RNA using the four ribonucleoside triphosphates as substrates. The sequence is that of DNA-directed RNA polymerase subunit beta from Methylobacterium radiotolerans (strain ATCC 27329 / DSM 1819 / JCM 2831 / NBRC 15690 / NCIMB 10815 / 0-1).